The primary structure comprises 406 residues: NAC transcription factor NAM-1 (406 aa).

The span at 1–11 shows a compositional bias: polar residues; the sequence is MGSPDSSSGSA. A disordered region spans residues 1 to 40; it reads MGSPDSSSGSAQKPPRHQHQHQPPPPRRQGSAPELPPGFR. Residues 35–204 form the NAC domain; that stretch reads LPPGFRFHPT…DWVLCRIYKK (170 aa). Residues 137-210 mediate DNA binding; sequence VGVKKALVFY…IYKKTSKAAA (74 aa).

The protein localises to the nucleus. Functionally, transcription factor of the NAC family associated with the grain protein content (GPC). Accelerates senescence and increases nutrient remobilization from leaves to developing grains. Sequences of 11 European varieties of H.vulgare tested belongs to the same haplotype while the sequence found in H.spontaneum, an ancestor of the cultivated H.vulgare which has a higher GPC, belongs to an other haplotype. This is NAC transcription factor NAM-1 (NAM-1) from Hordeum vulgare subsp. vulgare (Domesticated barley).